We begin with the raw amino-acid sequence, 416 residues long: Serine/threonine transporter SstT (416 aa).

The next 9 helical transmembrane spans lie at 15–35 (SLVS…MFMP), 49–69 (VGAL…AAII), 82–102 (ILLL…VASF), 141–161 (ALMD…GIAM), 192–212 (LGIL…ALFG), 217–237 (LVVL…IIVF), 288–308 (VSIP…ITVL), 330–350 (VVAT…LLLI), and 356–376 (LFGI…IIGV).

The protein belongs to the dicarboxylate/amino acid:cation symporter (DAACS) (TC 2.A.23) family.

The protein localises to the cell inner membrane. The catalysed reaction is L-serine(in) + Na(+)(in) = L-serine(out) + Na(+)(out). The enzyme catalyses L-threonine(in) + Na(+)(in) = L-threonine(out) + Na(+)(out). Involved in the import of serine and threonine into the cell, with the concomitant import of sodium (symport system). This is Serine/threonine transporter SstT from Aeromonas salmonicida (strain A449).